A 187-amino-acid chain; its full sequence is UPF0301 protein LPC_2717 (187 aa).

The protein belongs to the UPF0301 (AlgH) family.

The protein is UPF0301 protein LPC_2717 of Legionella pneumophila (strain Corby).